Consider the following 339-residue polypeptide: Riboflavin biosynthesis protein RibD (339 aa).

A deaminase region spans residues Met-1 to Gly-152. The CMP/dCMP-type deaminase domain maps to Lys-7–Arg-129. His-57 is a Zn(2+) binding site. Catalysis depends on Glu-59, which acts as the Proton donor. Residues Cys-82 and Cys-91 each contribute to the Zn(2+) site. Residues Leu-153–Arg-339 are reductase. NADP(+)-binding positions include Ala-161 and Ser-168–Ala-171. Ser-175 contacts substrate. Trp-177 is a binding site for NADP(+). A substrate-binding site is contributed by Arg-191. Residues Thr-203 and Asp-207 each coordinate NADP(+). Substrate-binding residues include Leu-211, Arg-214, and Glu-272. Gly-274–Ala-280 contributes to the NADP(+) binding site.

This sequence in the N-terminal section; belongs to the cytidine and deoxycytidylate deaminase family. The protein in the C-terminal section; belongs to the HTP reductase family. Zn(2+) is required as a cofactor.

The catalysed reaction is 2,5-diamino-6-hydroxy-4-(5-phosphoribosylamino)-pyrimidine + H2O + H(+) = 5-amino-6-(5-phospho-D-ribosylamino)uracil + NH4(+). It carries out the reaction 5-amino-6-(5-phospho-D-ribitylamino)uracil + NADP(+) = 5-amino-6-(5-phospho-D-ribosylamino)uracil + NADPH + H(+). Its pathway is cofactor biosynthesis; riboflavin biosynthesis; 5-amino-6-(D-ribitylamino)uracil from GTP: step 2/4. It functions in the pathway cofactor biosynthesis; riboflavin biosynthesis; 5-amino-6-(D-ribitylamino)uracil from GTP: step 3/4. In terms of biological role, converts 2,5-diamino-6-(ribosylamino)-4(3h)-pyrimidinone 5'-phosphate into 5-amino-6-(ribosylamino)-2,4(1h,3h)-pyrimidinedione 5'-phosphate. This is Riboflavin biosynthesis protein RibD (ribD) from Mycobacterium tuberculosis (strain CDC 1551 / Oshkosh).